Reading from the N-terminus, the 1183-residue chain is Translation initiation factor IF-2 (1183 aa).

2 disordered regions span residues 65-512 and 540-579; these read SSKN…KVHI and LARP…AMEL. Basic and acidic residues predominate over residues 83–99; that stretch reads TQKDQKTEPKKKNHDQT. The span at 100-130 shows a compositional bias: polar residues; sequence ELSQAKLNTLLKPSQTLIKSQGSSQANNQKA. Basic and acidic residues predominate over residues 220 to 229; sequence PKIDIQDKKP. Residues 231–270 are compositionally biased toward polar residues; that stretch reads QPNNQKAKTRINQGEISPQKVGQGNIQKIKSQNKQNAPSR. Basic and acidic residues predominate over residues 288-304; sequence IRKEKPVNKPHTNEVRN. Composition is skewed to polar residues over residues 321–336 and 357–367; these read ANRQ…NNRI and NRTTQGQNRPG. Residues 485-499 are compositionally biased toward basic and acidic residues; it reads GRPDWDDSAKLDALR. Basic residues-rich tracts occupy residues 544-553 and 560-574; these read SKPKVGKRNN and LKKR…RQRR. Residues 675 to 847 form the tr-type G domain; sequence RRPPVVTVMG…VLLVTEVEDL (173 aa). The interval 684 to 691 is G1; sequence GHVDHGKT. Residue 684–691 participates in GTP binding; it reads GHVDHGKT. The interval 709–713 is G2; the sequence is GITQH. Positions 734–737 are G3; the sequence is DTPG. GTP is bound by residues 734-738 and 788-791; these read DTPGH and NKID. Positions 788–791 are G4; it reads NKID. Residues 824–826 form a G5 region; that stretch reads SAI.

Belongs to the TRAFAC class translation factor GTPase superfamily. Classic translation factor GTPase family. IF-2 subfamily.

It localises to the cytoplasm. Its function is as follows. One of the essential components for the initiation of protein synthesis. Protects formylmethionyl-tRNA from spontaneous hydrolysis and promotes its binding to the 30S ribosomal subunits. Also involved in the hydrolysis of GTP during the formation of the 70S ribosomal complex. In Prochlorococcus marinus (strain NATL2A), this protein is Translation initiation factor IF-2.